A 93-amino-acid polypeptide reads, in one-letter code: Acylphosphatase (93 aa).

Residues 6-93 (RLVAWVRGQV…RGGYEGFAIR (88 aa)) enclose the Acylphosphatase-like domain. Residues arginine 21 and asparagine 40 contribute to the active site.

This sequence belongs to the acylphosphatase family.

It carries out the reaction an acyl phosphate + H2O = a carboxylate + phosphate + H(+). This is Acylphosphatase (acyP) from Streptomyces coelicolor (strain ATCC BAA-471 / A3(2) / M145).